We begin with the raw amino-acid sequence, 229 residues long: Ribonuclease 3 (229 aa).

The region spanning 4-133 is the RNase III domain; sequence WEELQESVGF…FIGALYLDNG (130 aa). A Mg(2+)-binding site is contributed by Glu46. Asp50 is a catalytic residue. Residues Asp119 and Glu122 each contribute to the Mg(2+) site. Glu122 is a catalytic residue. Residues 159 to 228 form the DRBM domain; it reads DYKTQLQEIV…AQFAINQLTH (70 aa).

Belongs to the ribonuclease III family. As to quaternary structure, homodimer. It depends on Mg(2+) as a cofactor.

The protein localises to the cytoplasm. It catalyses the reaction Endonucleolytic cleavage to 5'-phosphomonoester.. Its function is as follows. Digests double-stranded RNA. Involved in the processing of primary rRNA transcript to yield the immediate precursors to the large and small rRNAs (23S and 16S). Processes some mRNAs, and tRNAs when they are encoded in the rRNA operon. Processes pre-crRNA and tracrRNA of type II CRISPR loci if present in the organism. The protein is Ribonuclease 3 of Listeria innocua serovar 6a (strain ATCC BAA-680 / CLIP 11262).